Here is a 571-residue protein sequence, read N- to C-terminus: Proline--tRNA ligase (571 aa).

This sequence belongs to the class-II aminoacyl-tRNA synthetase family. ProS type 1 subfamily. In terms of assembly, homodimer.

Its subcellular location is the cytoplasm. It carries out the reaction tRNA(Pro) + L-proline + ATP = L-prolyl-tRNA(Pro) + AMP + diphosphate. Its function is as follows. Catalyzes the attachment of proline to tRNA(Pro) in a two-step reaction: proline is first activated by ATP to form Pro-AMP and then transferred to the acceptor end of tRNA(Pro). As ProRS can inadvertently accommodate and process non-cognate amino acids such as alanine and cysteine, to avoid such errors it has two additional distinct editing activities against alanine. One activity is designated as 'pretransfer' editing and involves the tRNA(Pro)-independent hydrolysis of activated Ala-AMP. The other activity is designated 'posttransfer' editing and involves deacylation of mischarged Ala-tRNA(Pro). The misacylated Cys-tRNA(Pro) is not edited by ProRS. This is Proline--tRNA ligase from Pseudomonas syringae pv. syringae (strain B728a).